We begin with the raw amino-acid sequence, 1119 residues long: Protein translocase subunit SecA (1119 aa).

Residues Gln-177, 195–199 (GEGKT), and Asp-692 each bind ATP. Residues 1025-1081 (APSIHEARQTKSKEKVETRKEEIPNMDERAAQSRAAGNTQRQQPEVTETIVRDRPKI) are disordered. Over residues 1029 to 1055 (HEARQTKSKEKVETRKEEIPNMDERAA) the composition is skewed to basic and acidic residues. Positions 1059–1070 (AAGNTQRQQPEV) are enriched in polar residues.

This sequence belongs to the SecA family. Monomer and homodimer. Part of the essential Sec protein translocation apparatus which comprises SecA, SecYEG and auxiliary proteins SecDF. Other proteins may also be involved.

The protein resides in the cell inner membrane. Its subcellular location is the cytoplasm. The catalysed reaction is ATP + H2O + cellular proteinSide 1 = ADP + phosphate + cellular proteinSide 2.. Part of the Sec protein translocase complex. Interacts with the SecYEG preprotein conducting channel. Has a central role in coupling the hydrolysis of ATP to the transfer of proteins into and across the cell membrane, serving as an ATP-driven molecular motor driving the stepwise translocation of polypeptide chains across the membrane. This Christiangramia forsetii (strain DSM 17595 / CGMCC 1.15422 / KT0803) (Gramella forsetii) protein is Protein translocase subunit SecA.